The chain runs to 316 residues: MKVLWVALVITLLAGCQAEVEPEPEPEVQLGREWPRWQGSQPWEQALGRFWDYLRWVQTLSDQVQEELLSTQVIQELTVLMDETMKEVKAYREELEGQLGPIAQETQARVSKELQAAQARLASDMEDVRSRVAQYRSEVQALMGQTTDELRGRLASHLRKLRKRLLRDAEDLQKRLVVYRAGALEGSERSVSAIRERLGPLVEQGRVRAATVGTLASQTLRERAEAWHQKLRGRMEEMGTQARDHLEEMREQLEEVRAKVEEQGSQMRLQAEAFQARLKSWFEPLVEDMQRQWAGLVEKVQLAMATGPTSAPIENN.

Positions 1–18 are cleaved as a signal peptide; it reads MKVLWVALVITLLAGCQA. Repeat copies occupy residues 79–100, 101–122, 123–144, 145–166, 167–188, 189–210, 211–232, and 233–254. Residues 79–254 form an 8 X 22 AA approximate tandem repeats region; the sequence is VLMDETMKEV…HLEEMREQLE (176 aa). Residues 157–167 are LDL and other lipoprotein receptors binding; sequence HLRKLRKRLLR. 161-164 lines the heparin pocket; the sequence is LRKR. Positions 209–289 are lipid-binding and lipoprotein association; the sequence is AATVGTLASQ…SWFEPLVEDM (81 aa). A heparin-binding site is contributed by 228 to 235; that stretch reads HQKLRGRM. The tract at residues 265–316 is homooligomerization; that stretch reads SQMRLQAEAFQARLKSWFEPLVEDMQRQWAGLVEKVQLAMATGPTSAPIENN. The tract at residues 277-289 is specificity for association with VLDL; the sequence is RLKSWFEPLVEDM.

This sequence belongs to the apolipoprotein A1/A4/E family. Homotetramer. May interact with ABCA1; functionally associated with ABCA1 in the biogenesis of HDLs. May interact with APP/A4 amyloid-beta peptide; the interaction is extremely stable in vitro but its physiological significance is unclear. May interact with MAPT. May interact with MAP2. In the cerebrospinal fluid, interacts with secreted SORL1. Interacts with PMEL; this allows the loading of PMEL luminal fragment on ILVs to induce fibril nucleation. In terms of processing, APOE exists as multiple glycosylated and sialylated glycoforms within cells and in plasma. The extent of glycosylation and sialylation are tissue and context specific. Glycated in plasma VLDL. Post-translationally, phosphorylated by FAM20C in the extracellular medium.

The protein resides in the secreted. It is found in the extracellular space. The protein localises to the extracellular matrix. It localises to the extracellular vesicle. Its subcellular location is the endosome. The protein resides in the multivesicular body. In terms of biological role, APOE is an apolipoprotein, a protein associating with lipid particles, that mainly functions in lipoprotein-mediated lipid transport between organs via the plasma and interstitial fluids. APOE is a core component of plasma lipoproteins and is involved in their production, conversion and clearance. Apolipoproteins are amphipathic molecules that interact both with lipids of the lipoprotein particle core and the aqueous environment of the plasma. As such, APOE associates with chylomicrons, chylomicron remnants, very low density lipoproteins (VLDL) and intermediate density lipoproteins (IDL) but shows a preferential binding to high-density lipoproteins (HDL). It also binds a wide range of cellular receptors including the LDL receptor/LDLR and the very low-density lipoprotein receptor/VLDLR that mediate the cellular uptake of the APOE-containing lipoprotein particles. Finally, APOE also has a heparin-binding activity and binds heparan-sulfate proteoglycans on the surface of cells, a property that supports the capture and the receptor-mediated uptake of APOE-containing lipoproteins by cells. This chain is Apolipoprotein E (APOE), found in Tursiops truncatus (Atlantic bottle-nosed dolphin).